The chain runs to 205 residues: NMLAHLEDGALNGDTLTPDRKHLLEAQRNRAHSPEMPMHLGPQFVYQWQSNQNAAMSAMPNLQSRLSSLSHISLNLDHPEGRSGSASGSAANLAGSNTHASSVREYRCEYCGKQFGMSWNLKTHLRVHTGEKPFACRLCVAMFKQKAHLLKHLCSVHRNVITTTNGADTENRYSCCFCSMCFESVQELVRHLSGHHNNLLLTKNL.

3 C2H2-type zinc fingers span residues 106-128 (YRCE…LRVH), 134-157 (FACR…CSVH), and 173-196 (YSCC…SGHH).

The protein localises to the nucleus. Probable transcription factor, which is required for terminalia development. In Drosophila yakuba (Fruit fly), this protein is Probable transcription factor Ken (ken).